The chain runs to 457 residues: DDB1- and CUL4-associated factor 10 (457 aa).

4 WD repeats span residues 65–104, 108–146, 150–189, and 195–234; these read RTHG…HIKT, AHED…SKAC, GHTS…EDGC, and FHTR…KSLE. Positions 246-265 are enriched in low complexity; sequence TASTSDMTSTSSETRPSSSP. Positions 246-304 are disordered; the sequence is TASTSDMTSTSSETRPSSSPCHNSDSGPLFEKHMSRSSQREGTSPRNSLEVLTPEVPGE. Over residues 281-292 the composition is skewed to polar residues; that stretch reads RSSQREGTSPRN. WD repeat units lie at residues 306-346, 368-406, and 424-457; these read DRGN…QEGT, VGRG…KELV, and SHKD…QPKF.

Belongs to the WD repeat DCAF10 family.

Its pathway is protein modification; protein ubiquitination. May function as a substrate receptor for CUL4-DDB1 E3 ubiquitin-protein ligase complex. This Xenopus laevis (African clawed frog) protein is DDB1- and CUL4-associated factor 10 (dcaf10).